Here is a 465-residue protein sequence, read N- to C-terminus: Box C/D snoRNA protein 1 (465 aa).

Positions 1 to 72 (MEFAAENEGK…GSRQRPEEIP (72 aa)) are disordered. A Phosphoserine modification is found at Ser-25. Residues 56–70 (EIGDGEEGSRQRPEE) show a composition bias toward basic and acidic residues. Glycyl lysine isopeptide (Lys-Gly) (interchain with G-Cter in SUMO2) cross-links involve residues Lys-79, Lys-108, Lys-118, Lys-138, Lys-148, Lys-157, Lys-168, Lys-178, and Lys-195. Zn(2+)-binding residues include Cys-215, Cys-218, Cys-227, Cys-230, Cys-235, Cys-239, His-243, and Cys-249. Residues 215–249 (CETCGTEEAKYRCPRCMRYSCSLPCVKKHKAELTC) form an HIT-type zinc finger. Lys-454 participates in a covalent cross-link: Glycyl lysine isopeptide (Lys-Gly) (interchain with G-Cter in SUMO2).

The protein belongs to the BCD1 family. As to quaternary structure, interacts with FBL, SNU13, NOP58, NUFIP1, RUVBL1, RUVBL2 and TAF9. Interacts (via HIT-type zinc finger) with the RUVBL1/RUVBL2 complex in the presence of ADP.

Functionally, required for box C/D snoRNAs accumulation involved in snoRNA processing, snoRNA transport to the nucleolus and ribosome biogenesis. The polypeptide is Box C/D snoRNA protein 1 (ZNHIT6) (Pongo abelii (Sumatran orangutan)).